Here is a 333-residue protein sequence, read N- to C-terminus: Glycogenin-1 (333 aa).

Thr-2 is subject to N-acetylthreonine. 4 residues coordinate UDP: Leu-9, Thr-11, Asn-12, and Tyr-15. UDP-alpha-D-glucose-binding residues include Leu-9, Thr-11, Asn-12, and Tyr-15. Ser-44 is modified (phosphoserine). Arg-77 contributes to the UDP binding site. UDP-alpha-D-glucose contacts are provided by Arg-77, Lys-86, Asp-102, Ala-103, Asp-104, Asn-133, Ser-134, Asp-160, Asp-163, and Gln-164. Asp-102, Ala-103, and Asp-104 together coordinate UDP. Residue Asp-102 participates in Mn(2+) binding. Asp-104 contacts Mn(2+). Tyr-195 carries an O-linked (Glc...) tyrosine glycan. 3 residues coordinate UDP: His-212, Gly-215, and Lys-218. His-212 lines the Mn(2+) pocket. UDP-alpha-D-glucose-binding residues include Gly-215 and Lys-218. The interaction with GYS1 stretch occupies residues 284–316; it reads SDLSFGEAPAAPQPSMSSEERKERWEQGQADYM. Residues 290–316 form a disordered region; that stretch reads EAPAAPQPSMSSEERKERWEQGQADYM.

This sequence belongs to the glycosyltransferase 8 family. Glycogenin subfamily. Part of the GYS1-GYG1 complex, a heterooctamer composed of a tetramer of GYS1 and 2 dimers of GYG1, where each GYS1 protomer binds to one GYG1 subunit (via GYG1 C-terminus); the GYS1 tetramer may dissociate from GYG1 dimers to continue glycogen polymerization on its own. May also form a heterooctamer complex with GYS2. Mn(2+) is required as a cofactor. In terms of processing, self-glycosylated by the transfer of glucose residues from UDP-glucose to itself, forming an alpha-1,4-glycan of around 10 residues attached to Tyr-195. Phosphorylated. In terms of tissue distribution, skeletal muscle, heart, to a lesser extent in kidney, lung and brain.

Its subcellular location is the cytoplasm. The protein localises to the nucleus. It catalyses the reaction L-tyrosyl-[glycogenin] + UDP-alpha-D-glucose = alpha-D-glucosyl-L-tyrosyl-[glycogenin] + UDP + H(+). The catalysed reaction is [1,4-alpha-D-glucosyl](n)-L-tyrosyl-[glycogenin] + UDP-alpha-D-glucose = [1,4-alpha-D-glucosyl](n+1)-L-tyrosyl-[glycogenin] + UDP + H(+). It functions in the pathway glycan biosynthesis; glycogen biosynthesis. Functionally, glycogenin participates in the glycogen biosynthetic process along with glycogen synthase and glycogen branching enzyme. It catalyzes the formation of a short alpha (1,4)-glucosyl chain covalently attached via a glucose 1-O-tyrosyl linkage to internal tyrosine residues and these chains act as primers for the elongation reaction catalyzed by glycogen synthase. The polypeptide is Glycogenin-1 (Mus musculus (Mouse)).